A 220-amino-acid chain; its full sequence is CASP-like protein 4B1 (220 aa).

The Cytoplasmic segment spans residues Met-1–Lys-74. Positions Thr-13–Gly-56 are disordered. A helical membrane pass occupies residues Ser-75 to Ala-95. Topologically, residues Ser-96 to Gln-109 are extracellular. A helical membrane pass occupies residues Glu-110–Ala-127. Residues Gln-128–Asp-152 lie on the Cytoplasmic side of the membrane. A helical transmembrane segment spans residues Phe-153–Ile-173. Residues Thr-174–Ala-188 are Extracellular-facing. Asn-184 carries N-linked (GlcNAc...) asparagine glycosylation. Residues Thr-189–Val-209 form a helical membrane-spanning segment. At Ser-210–Met-220 the chain is on the cytoplasmic side.

This sequence belongs to the Casparian strip membrane proteins (CASP) family. As to quaternary structure, homodimer and heterodimers.

The protein resides in the cell membrane. The protein is CASP-like protein 4B1 of Sorghum bicolor (Sorghum).